The primary structure comprises 311 residues: Lipoyl synthase (311 aa).

Residues Cys-55, Cys-60, Cys-66, Cys-81, Cys-85, Cys-88, and Ser-292 each contribute to the [4Fe-4S] cluster site. A Radical SAM core domain is found at Trp-67 to Ala-281.

The protein belongs to the radical SAM superfamily. Lipoyl synthase family. The cofactor is [4Fe-4S] cluster.

It localises to the cytoplasm. It catalyses the reaction [[Fe-S] cluster scaffold protein carrying a second [4Fe-4S](2+) cluster] + N(6)-octanoyl-L-lysyl-[protein] + 2 oxidized [2Fe-2S]-[ferredoxin] + 2 S-adenosyl-L-methionine + 4 H(+) = [[Fe-S] cluster scaffold protein] + N(6)-[(R)-dihydrolipoyl]-L-lysyl-[protein] + 4 Fe(3+) + 2 hydrogen sulfide + 2 5'-deoxyadenosine + 2 L-methionine + 2 reduced [2Fe-2S]-[ferredoxin]. It functions in the pathway protein modification; protein lipoylation via endogenous pathway; protein N(6)-(lipoyl)lysine from octanoyl-[acyl-carrier-protein]: step 2/2. Its function is as follows. Catalyzes the radical-mediated insertion of two sulfur atoms into the C-6 and C-8 positions of the octanoyl moiety bound to the lipoyl domains of lipoate-dependent enzymes, thereby converting the octanoylated domains into lipoylated derivatives. This is Lipoyl synthase from Mycobacterium bovis (strain ATCC BAA-935 / AF2122/97).